The chain runs to 89 residues: Small ribosomal subunit protein bS20 (89 aa).

It belongs to the bacterial ribosomal protein bS20 family.

Its function is as follows. Binds directly to 16S ribosomal RNA. This Syntrophus aciditrophicus (strain SB) protein is Small ribosomal subunit protein bS20.